Consider the following 332-residue polypeptide: Probable sugar phosphate/phosphate translocator At1g53660 (332 aa).

10 helical membrane passes run 19-39 (ASIL…KWVL), 46-66 (FPYP…LCFL), 82-102 (LEIY…TLWL), 120-140 (AIMP…IMSC), 143-163 (LLIM…ELNI), 165-185 (WVGV…LILM), 199-219 (LSLM…PWIF), 233-253 (LVLS…FLVI), 259-281 (LTIR…LLFA), and 285-304 (LTII…ATYN). Polar residues predominate over residues 312-322 (ESITLVSQSPK). The interval 312–332 (ESITLVSQSPKNSDKKPDGPL) is disordered. A compositionally biased stretch (basic and acidic residues) spans 323 to 332 (NSDKKPDGPL).

Belongs to the TPT transporter family. TPT (TC 2.A.7.9) subfamily.

Its subcellular location is the membrane. This chain is Probable sugar phosphate/phosphate translocator At1g53660, found in Arabidopsis thaliana (Mouse-ear cress).